The primary structure comprises 708 residues: Leukotoxin translocation ATP-binding protein LktB (708 aa).

Residues 1 to 126 (MEANHQRNDL…ACYQGQLILV (126 aa)) enclose the Peptidase C39 domain. The ABC transmembrane type-1 domain maps to 155–437 (FLETLIVSIF…LAQLWQDFQQ (283 aa)). Helical transmembrane passes span 159-179 (LIVS…FQVV), 192-212 (LNII…LSGL), 270-290 (ALTS…MWYY), 296-316 (LVIL…SPIL), and 389-409 (VMVI…LSIG). One can recognise an ABC transporter domain in the interval 469-704 (ISFKNIRFRY…SNGLYSYLHQ (236 aa)). 503–510 (GRSGSGKS) lines the ATP pocket.

This sequence belongs to the ABC transporter superfamily. Protein-1 exporter (TC 3.A.1.109) family. Homodimer.

The protein localises to the cell inner membrane. It carries out the reaction ATP + H2O + proteinSide 1 = ADP + phosphate + proteinSide 2.. Its function is as follows. Part of the ABC transporter complex LktBD involved in leukotoxin export. Transmembrane domains (TMD) form a pore in the inner membrane and the ATP-binding domain (NBD) is responsible for energy generation. In Mannheimia haemolytica (Pasteurella haemolytica), this protein is Leukotoxin translocation ATP-binding protein LktB (lktB).